The primary structure comprises 691 residues: Methionine--tRNA ligase (691 aa).

The 'HIGH' region motif lies at 14 to 24; the sequence is PYANGPFHLGH. Zn(2+)-binding residues include cysteine 148, cysteine 151, cysteine 161, and cysteine 164. Positions 344–348 match the 'KMSKS' region motif; the sequence is KMSKS. Lysine 347 is an ATP binding site. The 107-residue stretch at 585–691 folds into the tRNA-binding domain; that stretch reads DFDRVDLRVA…PGAKPGMRVR (107 aa).

This sequence belongs to the class-I aminoacyl-tRNA synthetase family. MetG type 1 subfamily. As to quaternary structure, homodimer. The cofactor is Zn(2+).

It is found in the cytoplasm. The enzyme catalyses tRNA(Met) + L-methionine + ATP = L-methionyl-tRNA(Met) + AMP + diphosphate. Is required not only for elongation of protein synthesis but also for the initiation of all mRNA translation through initiator tRNA(fMet) aminoacylation. The sequence is that of Methionine--tRNA ligase from Verminephrobacter eiseniae (strain EF01-2).